The sequence spans 413 residues: Multifunctional CCA protein (413 aa).

Glycine 8 and arginine 11 together coordinate ATP. CTP contacts are provided by glycine 8 and arginine 11. Positions 21 and 23 each coordinate Mg(2+). Residues arginine 91, arginine 143, and arginine 146 each contribute to the ATP site. Arginine 91, arginine 143, and arginine 146 together coordinate CTP. One can recognise an HD domain in the interval 232–333 (TGVHVMMVVD…VRLFERSDAL (102 aa)).

This sequence belongs to the tRNA nucleotidyltransferase/poly(A) polymerase family. Bacterial CCA-adding enzyme type 1 subfamily. In terms of assembly, monomer. Can also form homodimers and oligomers. It depends on Mg(2+) as a cofactor. Ni(2+) serves as cofactor.

It catalyses the reaction a tRNA precursor + 2 CTP + ATP = a tRNA with a 3' CCA end + 3 diphosphate. The catalysed reaction is a tRNA with a 3' CCA end + 2 CTP + ATP = a tRNA with a 3' CCACCA end + 3 diphosphate. Its function is as follows. Catalyzes the addition and repair of the essential 3'-terminal CCA sequence in tRNAs without using a nucleic acid template. Adds these three nucleotides in the order of C, C, and A to the tRNA nucleotide-73, using CTP and ATP as substrates and producing inorganic pyrophosphate. tRNA 3'-terminal CCA addition is required both for tRNA processing and repair. Also involved in tRNA surveillance by mediating tandem CCA addition to generate a CCACCA at the 3' terminus of unstable tRNAs. While stable tRNAs receive only 3'-terminal CCA, unstable tRNAs are marked with CCACCA and rapidly degraded. This is Multifunctional CCA protein from Burkholderia cenocepacia (strain ATCC BAA-245 / DSM 16553 / LMG 16656 / NCTC 13227 / J2315 / CF5610) (Burkholderia cepacia (strain J2315)).